The sequence spans 914 residues: Thyroid peroxidase (914 aa).

An N-terminal signal peptide occupies residues 1–31 (MRTLGAMAIMLVVMGTVIFLSFILRSRDILC). The Extracellular portion of the chain corresponds to 32-834 (GKTMKSHVIS…TCIDSGRLPR (803 aa)). The N-linked (GlcNAc...) asparagine glycan is linked to asparagine 123. Cysteine 136 and cysteine 152 are oxidised to a cystine. Residue aspartate 232 participates in heme b binding. Histidine 233 serves as the catalytic Proton acceptor. Ca(2+) is bound at residue aspartate 234. Intrachain disulfides connect cysteine 253–cysteine 263 and cysteine 257–cysteine 278. N-linked (GlcNAc...) asparagine glycans are attached at residues asparagine 271 and asparagine 299. Positions 313, 315, 317, and 319 each coordinate Ca(2+). N-linked (GlcNAc...) asparagine glycosylation is present at asparagine 334. The heme b site is built by glutamate 387 and histidine 482. 7 cysteine pairs are disulfide-bonded: cysteine 586–cysteine 643, cysteine 684–cysteine 709, cysteine 730–cysteine 770, cysteine 756–cysteine 782, cysteine 788–cysteine 802, cysteine 796–cysteine 811, and cysteine 813–cysteine 826. N-linked (GlcNAc...) asparagine glycosylation is present at asparagine 603. Positions 728-783 (DKCVFPEEVDNGNFVHCEESGKLVLVYSCFHGYKLQGQEQVTCTQKGWDSEPPVCK) constitute a Sushi domain. One can recognise an EGF-like; calcium-binding domain in the interval 784–827 (DVNECADLTHPPCHPSAQCKNTKGSFQCVCTDPYVLGEDEKTCI). A helical membrane pass occupies residues 835–859 (ASWVSIALGALLIGGLASLTWIVIC). The Cytoplasmic segment spans residues 860–914 (RWTHADKKATLPITERVTTQSGCRKSQGRGISPHKAAAQDTGQEPASGSRVLLCE). The disordered stretch occupies residues 881 to 909 (GCRKSQGRGISPHKAAAQDTGQEPASGSR).

It belongs to the peroxidase family. XPO subfamily. In terms of assembly, interacts with DUOX1, DUOX2 and CYBA. Ca(2+) is required as a cofactor. It depends on heme b as a cofactor. Heme is covalently bound through a H(2)O(2)-dependent autocatalytic process. Heme insertion is important for the delivery of protein at the cell surface. Post-translationally, cleaved in its N-terminal part.

Its subcellular location is the membrane. The enzyme catalyses 2 iodide + H2O2 + 2 H(+) = diiodine + 2 H2O. It carries out the reaction [thyroglobulin]-L-tyrosine + iodide + H2O2 + H(+) = [thyroglobulin]-3-iodo-L-tyrosine + 2 H2O. It catalyses the reaction [thyroglobulin]-3-iodo-L-tyrosine + iodide + H2O2 + H(+) = [thyroglobulin]-3,5-diiodo-L-tyrosine + 2 H2O. The catalysed reaction is 2 [thyroglobulin]-3,5-diiodo-L-tyrosine + H2O2 = [thyroglobulin]-L-thyroxine + [thyroglobulin]-dehydroalanine + 2 H2O. The enzyme catalyses [thyroglobulin]-3-iodo-L-tyrosine + [thyroglobulin]-3,5-diiodo-L-tyrosine + H2O2 = [thyroglobulin]-3,3',5-triiodo-L-thyronine + [thyroglobulin]-dehydroalanine + 2 H2O. It functions in the pathway hormone biosynthesis; thyroid hormone biosynthesis. Functionally, iodination and coupling of the hormonogenic tyrosines in thyroglobulin to yield the thyroid hormones T(3) and T(4). In Mus musculus (Mouse), this protein is Thyroid peroxidase (Tpo).